A 424-amino-acid chain; its full sequence is Myb family transcription factor RLI1 (424 aa).

The disordered stretch occupies residues 144–165; that stretch reads RPQKRDSGERTPLPPPSQQQHQ. Residues 238-298 enclose the HTH myb-type domain; it reads APSKTRIRWT…HLQKYRIAKY (61 aa). The segment at residues 269-294 is a DNA-binding region (H-T-H motif); it reads PKGILKLMNSDGLTIYHIKSHLQKYR. The stretch at 326–391 forms a coiled coil; that stretch reads MQITEALRVQ…ELDDVVAFAA (66 aa). The LHEQLE signature appears at 342–347; sequence LHEQLE.

The protein belongs to the MYB-CC family. As to quaternary structure, interacts with SPX1 and SPX2 in the nucleus; these interactions prevent binding to the promoters of target genes, thus regulating negatively leaf inclination in response to phosphate (Pi) starvation. Homodimer. Interacts with PHR2 in the nucleus. Mostly expressed in roots and leaves blades and, to a lower extent, in leaves sheaths, culms and panicles. Localized in leaves lamina joints. As to expression, expressed equally in shoots and roots. In terms of tissue distribution, mostly expressed in shoots and, to a lower extent, in roots.

It is found in the nucleus. Functionally, transcription factor binding to specific DNA sequences of target genes promoters, such as the motif R1BS 5'-NAKATNCN-3' and the motif P1BS 5'-GNATATNC-3' to trigger their expression. Nitrate-induced component involved in modulating phosphate (Pi) response and homeostasis together with PHR2; activates directly the expression of Pi starvation-induced (PSI) genes upon nitrate disponibility, thus triggering the nitrate-induced phosphate response (NIPR) promoting Pi uptake activity. Its function is as follows. Binds preferentially to the P1BS motif 5'-GNATATNC-3' in target genes promoters. Binds preferentially to the R1BS motif 5'-NAKATNCN-3' in target genes promoters, including several genes involved in the plant hormone signal transduction pathway. Involved in the shoot architecture; positively regulates leaf inclination by affecting lamina joint cell elongation via the direct promotion of ILI4/BU1 and BC1 genes expression, especially in response to phosphate (Pi) availability. Regulates both brassinolide (BL) biosynthesis and signaling by directly activating BL-biosynthesis and signaling genes. The polypeptide is Myb family transcription factor RLI1 (Oryza sativa subsp. japonica (Rice)).